We begin with the raw amino-acid sequence, 84 residues long: DNA-directed RNA polymerase subunit Rpo5 (84 aa).

It belongs to the archaeal Rpo5/eukaryotic RPB5 RNA polymerase subunit family. As to quaternary structure, part of the RNA polymerase complex.

Its subcellular location is the cytoplasm. It catalyses the reaction RNA(n) + a ribonucleoside 5'-triphosphate = RNA(n+1) + diphosphate. Its function is as follows. DNA-dependent RNA polymerase (RNAP) catalyzes the transcription of DNA into RNA using the four ribonucleoside triphosphates as substrates. The chain is DNA-directed RNA polymerase subunit Rpo5 from Sulfurisphaera tokodaii (strain DSM 16993 / JCM 10545 / NBRC 100140 / 7) (Sulfolobus tokodaii).